Consider the following 520-residue polypeptide: Succinyl-CoA:3-ketoacid coenzyme A transferase 2B, mitochondrial (520 aa).

A mitochondrion-targeting transit peptide spans 1 to 39; the sequence is MAALRLLAWALPRGVSALRPRPALPHRLIRRYVSDRSGS. The tract at residues 280-299 is disordered; sequence ERLTTRDSKPAPGSKDNDPS. Glu342 serves as the catalytic 5-glutamyl coenzyme A thioester intermediate.

The protein belongs to the 3-oxoacid CoA-transferase family. Homodimer. As to expression, testis specific. Expressed in late spermatids. Accumulates during spermiogenesis. Also detected in the midpiece of spermatozoa.

It localises to the mitochondrion. It carries out the reaction a 3-oxo acid + succinyl-CoA = a 3-oxoacyl-CoA + succinate. Its pathway is ketone metabolism; succinyl-CoA degradation; acetoacetyl-CoA from succinyl-CoA: step 1/1. Its function is as follows. Key enzyme for ketone body catabolism. Transfers the CoA moiety from succinate to acetoacetate. Formation of the enzyme-CoA intermediate proceeds via an unstable anhydride species formed between the carboxylate groups of the enzyme and substrate. Probably play and important roles in the energy metabolism of spermatozoa. The sequence is that of Succinyl-CoA:3-ketoacid coenzyme A transferase 2B, mitochondrial (Oxct2b) from Mus musculus (Mouse).